Here is a 589-residue protein sequence, read N- to C-terminus: 2-succinyl-5-enolpyruvyl-6-hydroxy-3-cyclohexene-1-carboxylate synthase (589 aa).

The tract at residues 198 to 222 (DAATTEGAHDSHAPSQPTRGPRKLP) is disordered.

It belongs to the TPP enzyme family. MenD subfamily. In terms of assembly, homodimer. Mg(2+) serves as cofactor. It depends on Mn(2+) as a cofactor. Requires thiamine diphosphate as cofactor.

It catalyses the reaction isochorismate + 2-oxoglutarate + H(+) = 5-enolpyruvoyl-6-hydroxy-2-succinyl-cyclohex-3-ene-1-carboxylate + CO2. The protein operates within quinol/quinone metabolism; 1,4-dihydroxy-2-naphthoate biosynthesis; 1,4-dihydroxy-2-naphthoate from chorismate: step 2/7. It functions in the pathway quinol/quinone metabolism; menaquinone biosynthesis. Catalyzes the thiamine diphosphate-dependent decarboxylation of 2-oxoglutarate and the subsequent addition of the resulting succinic semialdehyde-thiamine pyrophosphate anion to isochorismate to yield 2-succinyl-5-enolpyruvyl-6-hydroxy-3-cyclohexene-1-carboxylate (SEPHCHC). This Corynebacterium jeikeium (strain K411) protein is 2-succinyl-5-enolpyruvyl-6-hydroxy-3-cyclohexene-1-carboxylate synthase.